The chain runs to 328 residues: BURP domain-containing protein 11 (328 aa).

In terms of domain architecture, BURP spans 74-318 (FFFRDALRPG…TKLSIVWVPR (245 aa)).

As to expression, expressed in roots.

This chain is BURP domain-containing protein 11 (BURP11), found in Oryza sativa subsp. japonica (Rice).